The following is a 61-amino-acid chain: Protein CopA/IncA (61 aa).

Functionally, controls the copy number in gene replication. This chain is Protein CopA/IncA (copA), found in Escherichia coli.